A 209-amino-acid chain; its full sequence is Ancillary SecYEG translocon subunit (209 aa).

Topologically, residues 1 to 23 (MAAHLEEQQELDNFKYFWKTTGK) are cytoplasmic. The helical transmembrane segment at 24–42 (WLFALLILAALGYLGYTVY) threads the bilayer. The Periplasmic segment spans residues 43–209 (QNRAASQNQE…LLQMKLDSLK (167 aa)). The stretch at 161-194 (PLLMETKGDVYAAQEKSQEALKNYGQALEKMPQD) is one TPR repeat.

It belongs to the YfgM family. Interacts with the SecYEG translocon. Forms a complex with PpiD.

The protein resides in the cell inner membrane. In terms of biological role, may mediate protein transfer from the SecYEG translocon to the periplasmic chaperone network via its periplasmic C-terminal region. The sequence is that of Ancillary SecYEG translocon subunit from Neisseria gonorrhoeae (strain ATCC 700825 / FA 1090).